The following is a 226-amino-acid chain: Urease accessory protein UreF (226 aa).

The protein belongs to the UreF family. In terms of assembly, ureD, UreF and UreG form a complex that acts as a GTP-hydrolysis-dependent molecular chaperone, activating the urease apoprotein by helping to assemble the nickel containing metallocenter of UreC. The UreE protein probably delivers the nickel.

Its subcellular location is the cytoplasm. Required for maturation of urease via the functional incorporation of the urease nickel metallocenter. The protein is Urease accessory protein UreF of Burkholderia cenocepacia (strain HI2424).